The following is a 190-amino-acid chain: Lipid A 1-phosphatase (190 aa).

Helical transmembrane passes span 22–42 (LLAL…PKVP), 60–80 (FIPT…VGLF), 117–137 (GNFN…AFLM), 145–162 (YFWL…RIYL), and 164–184 (MHTI…VSLF).

Belongs to the lipid A LpxE 1-phosphatase family. Does not require divalent cations. serves as cofactor.

It localises to the cell inner membrane. The protein operates within bacterial outer membrane biogenesis; LPS lipid A biosynthesis. Removes the 1-phosphate group from tetra- and probably hexaacylated lipid A species, has no requirement for the Kdo moiety of lipid A. Has no 4'-phosphatase activity. Has no activity on phospholipids (phosphatidylglycerol, phosphatidylethanolamine or cardiolipin). This enzyme has to act before EptA can attach phosphoethanolamine to the 1-position of lipid A. Absence of the 1-phosphate group renders the bacteria partially resistant to host-derived cationic antimicrobial peptides (CAMP), allowing it to camouflage itself from the host innate immune response, and plays a role in the long-term colonization of the host's stomach. In Helicobacter pylori (strain ATCC 700392 / 26695) (Campylobacter pylori), this protein is Lipid A 1-phosphatase.